We begin with the raw amino-acid sequence, 338 residues long: Mitochondrial amidoxime reducing component 2 (338 aa).

A mitochondrion-targeting transit peptide spans 1–35 (MGSSSSTALARLGLPGQPRSTWLGVAALGLAAVAL). Glycyl lysine isopeptide (Lys-Gly) (interchain with G-Cter in ubiquitin) cross-links involve residues Lys-59, Lys-138, and Lys-144. Lys-156 carries the N6-acetyllysine; alternate modification. Lys-156 is covalently cross-linked (Glycyl lysine isopeptide (Lys-Gly) (interchain with G-Cter in ubiquitin); alternate). Glycyl lysine isopeptide (Lys-Gly) (interchain with G-Cter in ubiquitin) cross-links involve residues Lys-173, Lys-187, Lys-289, and Lys-296. The MOSC domain maps to 188–336 (GRTTKKLYPS…LRVGDPVYRM (149 aa)).

In terms of assembly, component of a complex composed of cytochrome b5, NADH-cytochrome b5 reductase (CYB5R3) and MTARC2. Requires Mo-molybdopterin as cofactor. In terms of processing, ubiquitinated by PRKN during mitophagy, leading to its degradation and enhancement of mitophagy. Deubiquitinated by USP30.

It localises to the mitochondrion outer membrane. Its subcellular location is the peroxisome. The catalysed reaction is N(omega)-hydroxy-L-arginine + 2 Fe(II)-[cytochrome b5] + 2 H(+) = L-arginine + 2 Fe(III)-[cytochrome b5] + H2O. Catalyzes the reduction of N-oxygenated molecules, acting as a counterpart of cytochrome P450 and flavin-containing monooxygenases in metabolic cycles. As a component of prodrug-converting system, reduces a multitude of N-hydroxylated prodrugs particularly amidoximes, leading to increased drug bioavailability. May be involved in mitochondrial N(omega)-hydroxy-L-arginine (NOHA) reduction, regulating endogenous nitric oxide levels and biosynthesis. Postulated to cleave the N-OH bond of N-hydroxylated substrates in concert with electron transfer from NADH to cytochrome b5 reductase then to cytochrome b5, the ultimate electron donor that primes the active site for substrate reduction. The protein is Mitochondrial amidoxime reducing component 2 (Mtarc2) of Rattus norvegicus (Rat).